Reading from the N-terminus, the 701-residue chain is Elongation factor G (701 aa).

One can recognise a tr-type G domain in the interval 6 to 285 (HKVRNIGIMA…AVVAYLPNPL (280 aa)). GTP contacts are provided by residues 15 to 22 (AHIDAGKT), 79 to 83 (DNPGH), and 133 to 136 (NKMD).

Belongs to the TRAFAC class translation factor GTPase superfamily. Classic translation factor GTPase family. EF-G/EF-2 subfamily.

Its subcellular location is the cytoplasm. Its function is as follows. Catalyzes the GTP-dependent ribosomal translocation step during translation elongation. During this step, the ribosome changes from the pre-translocational (PRE) to the post-translocational (POST) state as the newly formed A-site-bound peptidyl-tRNA and P-site-bound deacylated tRNA move to the P and E sites, respectively. Catalyzes the coordinated movement of the two tRNA molecules, the mRNA and conformational changes in the ribosome. The sequence is that of Elongation factor G (fusA) from Micrococcus luteus (Micrococcus lysodeikticus).